Here is a 244-residue protein sequence, read N- to C-terminus: Ethylene-responsive transcription factor ERF013 (244 aa).

The disordered stretch occupies residues 1–33; it reads MVKQELKIQVTTSSSSLSHSSSSSSSSTSALRH. The segment covering 11-29 has biased composition (low complexity); it reads TTSSSSLSHSSSSSSSSTS. The segment at residues 42 to 99 is a DNA-binding region (AP2/ERF); it reads KYKGVRMRSWGSWVTEIRAPNQKTRIWLGSYSTAEAAARAYDAALLCLKGPKANLNFP. The interval 123–178 is disordered; sequence QKVAAQAANSSSDHFTPPSDENDHDHDDGLDHHPSASSSAASSPPDDDHHNDDDGD. Residues 143-156 show a composition bias toward basic and acidic residues; it reads ENDHDHDDGLDHHP. Over residues 157 to 166 the composition is skewed to low complexity; it reads SASSSAASSP.

This sequence belongs to the AP2/ERF transcription factor family. ERF subfamily.

The protein localises to the nucleus. In terms of biological role, probably acts as a transcriptional activator. Binds to the GCC-box pathogenesis-related promoter element. May be involved in the regulation of gene expression by stress factors and by components of stress signal transduction pathways. This Arabidopsis thaliana (Mouse-ear cress) protein is Ethylene-responsive transcription factor ERF013 (ERF013).